The primary structure comprises 246 residues: 23S rRNA (guanosine-2'-O-)-methyltransferase RlmB (246 aa).

S-adenosyl-L-methionine contacts are provided by glycine 197, isoleucine 217, and leucine 226.

The protein belongs to the class IV-like SAM-binding methyltransferase superfamily. RNA methyltransferase TrmH family. RlmB subfamily.

Its subcellular location is the cytoplasm. The catalysed reaction is guanosine(2251) in 23S rRNA + S-adenosyl-L-methionine = 2'-O-methylguanosine(2251) in 23S rRNA + S-adenosyl-L-homocysteine + H(+). Specifically methylates the ribose of guanosine 2251 in 23S rRNA. In Haemophilus ducreyi (strain 35000HP / ATCC 700724), this protein is 23S rRNA (guanosine-2'-O-)-methyltransferase RlmB.